Here is a 230-residue protein sequence, read N- to C-terminus: Fibronectin type III domain-containing protein 4 (230 aa).

Positions 1-40 (MPGCLPADSVGTMASLMPLSPYLSPTVLLLVSCDLGFVRA) are cleaved as a signal peptide. Topologically, residues 41–163 (DRPPSPVNVT…GLDGERPLQT (123 aa)) are extracellular. The 94-residue stretch at 43 to 136 (PPSPVNVTVT…PRVHFRTLKG (94 aa)) folds into the Fibronectin type-III domain. N-linked (GlcNAc...) asparagine glycans are attached at residues Asn48 and Asn143. Residues 118–156 (GLRGESPPGPRVHFRTLKGSDRLPSNSSSPGDITVEGLD) form a disordered region. A helical transmembrane segment spans residues 164 to 184 (GEVVIIVVVLLMWAAVIGLFC). Residues 185 to 230 (RQYDIIKDNDSNNNPKEKGKGPEQSPQGRPVGTRQKKSPSINTIDV) lie on the Cytoplasmic side of the membrane. Over residues 193–205 (NDSNNNPKEKGKG) the composition is skewed to basic and acidic residues. The segment at 193-230 (NDSNNNPKEKGKGPEQSPQGRPVGTRQKKSPSINTIDV) is disordered.

The protein localises to the membrane. The protein resides in the secreted. In terms of biological role, has anti-inflammatory properties. In the colon, acts on macrophages to down-regulate inflammation. May suppress osteoclastogenesis and mature osteoclast resorptive function. In white adipose tissue, decreases local inflammation, via interaction with GPR116. Also required for proper systemic glucose tolerance, specifically sensitizing white adipocytes to insulin and promoting glucose uptake. The insulin sensitizing function in adipose tissue is mediated by interaction with ADGRF5/GPR116 and activation of cAMP signaling. The protein is Fibronectin type III domain-containing protein 4 (FNDC4) of Bos taurus (Bovine).